A 31-amino-acid polypeptide reads, in one-letter code: Cytochrome b6-f complex subunit 6 (31 aa).

Residues 4–24 (ITSFFGFLLAALTITSVLFIG) traverse the membrane as a helical segment.

Belongs to the PetL family. In terms of assembly, the 4 large subunits of the cytochrome b6-f complex are cytochrome b6, subunit IV (17 kDa polypeptide, PetD), cytochrome f and the Rieske protein, while the 4 small subunits are PetG, PetL, PetM and PetN. The complex functions as a dimer.

The protein localises to the plastid. It is found in the chloroplast thylakoid membrane. Component of the cytochrome b6-f complex, which mediates electron transfer between photosystem II (PSII) and photosystem I (PSI), cyclic electron flow around PSI, and state transitions. PetL is important for photoautotrophic growth as well as for electron transfer efficiency and stability of the cytochrome b6-f complex. This chain is Cytochrome b6-f complex subunit 6, found in Oenothera elata subsp. hookeri (Hooker's evening primrose).